Reading from the N-terminus, the 798-residue chain is PR domain zinc finger protein 4 (798 aa).

An SET domain is found at 408-525 (KQLVLRQSIV…PENELLFYYS (118 aa)). 5 consecutive C2H2-type zinc fingers follow at residues 586-608 (WKCSMCPQAFISPSKLHVHFMGH), 614-636 (HKCDFCSKAFSDPSNLRTHLKIH), 642-664 (YRCTLCDKSFTQKAHLESHMVIH), 670-692 (LKCDYCDKLFMRRQDLKQHVLIH), and 698-720 (IKCPKCDKLFLRTNHLKKHLNSH). The segment at 726–747 (YVCEKCTKAYLTKYHLTRHLKA) adopts a C2H2-type 6; degenerate zinc-finger fold. Residues 750 to 798 (EPASSSSAQDDEDEDGDSGEDGLPGSMTTEGCRMSSAVYSADESLSAHK) form a disordered region. Residues 758–769 (QDDEDEDGDSGE) are compositionally biased toward acidic residues.

The protein belongs to the class V-like SAM-binding methyltransferase superfamily.

The protein localises to the nucleus. In terms of biological role, may function as a transcription factor involved in cell differentiation. The polypeptide is PR domain zinc finger protein 4 (Prdm4) (Rattus norvegicus (Rat)).